Consider the following 197-residue polypeptide: Imidazoleglycerol-phosphate dehydratase (197 aa).

The protein belongs to the imidazoleglycerol-phosphate dehydratase family.

The protein resides in the cytoplasm. The catalysed reaction is D-erythro-1-(imidazol-4-yl)glycerol 3-phosphate = 3-(imidazol-4-yl)-2-oxopropyl phosphate + H2O. It functions in the pathway amino-acid biosynthesis; L-histidine biosynthesis; L-histidine from 5-phospho-alpha-D-ribose 1-diphosphate: step 6/9. This Chromobacterium violaceum (strain ATCC 12472 / DSM 30191 / JCM 1249 / CCUG 213 / NBRC 12614 / NCIMB 9131 / NCTC 9757 / MK) protein is Imidazoleglycerol-phosphate dehydratase.